A 139-amino-acid chain; its full sequence is Arsenate reductase (139 aa).

Active-site nucleophile residues include Cys10, Cys82, and Cys89. Intrachain disulfides connect Cys10–Cys82 and Cys82–Cys89.

It belongs to the low molecular weight phosphotyrosine protein phosphatase family. Thioredoxin-coupled ArsC subfamily.

It localises to the cytoplasm. It catalyses the reaction arsenate + [thioredoxin]-dithiol + H(+) = arsenite + [thioredoxin]-disulfide + H2O. Catalyzes the reduction of arsenate [As(V)] to arsenite [As(III)]. In Shouchella clausii (strain KSM-K16) (Alkalihalobacillus clausii), this protein is Arsenate reductase.